Reading from the N-terminus, the 292-residue chain is Bifunctional protein FolD 2 (292 aa).

Residues 166 to 168 (GHS) and Ile232 each bind NADP(+).

This sequence belongs to the tetrahydrofolate dehydrogenase/cyclohydrolase family. Homodimer.

It catalyses the reaction (6R)-5,10-methylene-5,6,7,8-tetrahydrofolate + NADP(+) = (6R)-5,10-methenyltetrahydrofolate + NADPH. It carries out the reaction (6R)-5,10-methenyltetrahydrofolate + H2O = (6R)-10-formyltetrahydrofolate + H(+). Its pathway is one-carbon metabolism; tetrahydrofolate interconversion. In terms of biological role, catalyzes the oxidation of 5,10-methylenetetrahydrofolate to 5,10-methenyltetrahydrofolate and then the hydrolysis of 5,10-methenyltetrahydrofolate to 10-formyltetrahydrofolate. The chain is Bifunctional protein FolD 2 from Ruegeria pomeroyi (strain ATCC 700808 / DSM 15171 / DSS-3) (Silicibacter pomeroyi).